A 293-amino-acid polypeptide reads, in one-letter code: MNAFDADITEHADSSGCHPLFRDVPATVEFNKLRKRLVRLTRQAIEDFAMVKPGDRWMVCLSGGKDSYGLLALLLDLKWRGLLPVELLAVNLDQGQPNFPKHILPDFLTRYGIEHRIEYQDTYSIVTDKLPETSTYCSLCSRLRRGNLYRIAREEGCSAIVLGHHREDILETFFMNLFHGGRLAAMPPKLLNDEGDLMVFRPLAYAAEDDLEKFANAMQFPIIPCDLCGSQDGLQRNAMKAMLIDIEKRMPGRKDTMIRALTNVRPSHLLDRKLFDFAGLMANGEKGSDDALW.

A PP-loop motif motif is present at residues 62–67 (SGGKDS). [4Fe-4S] cluster is bound by residues cysteine 137, cysteine 140, and cysteine 228.

It belongs to the TtcA family. In terms of assembly, homodimer. Mg(2+) is required as a cofactor. [4Fe-4S] cluster serves as cofactor.

The protein resides in the cytoplasm. It carries out the reaction cytidine(32) in tRNA + S-sulfanyl-L-cysteinyl-[cysteine desulfurase] + AH2 + ATP = 2-thiocytidine(32) in tRNA + L-cysteinyl-[cysteine desulfurase] + A + AMP + diphosphate + H(+). It participates in tRNA modification. In terms of biological role, catalyzes the ATP-dependent 2-thiolation of cytidine in position 32 of tRNA, to form 2-thiocytidine (s(2)C32). The sulfur atoms are provided by the cysteine/cysteine desulfurase (IscS) system. The sequence is that of tRNA-cytidine(32) 2-sulfurtransferase from Brucella melitensis biotype 1 (strain ATCC 23456 / CCUG 17765 / NCTC 10094 / 16M).